A 1312-amino-acid polypeptide reads, in one-letter code: Angiotensin-converting enzyme (1312 aa).

A signal peptide spans 1-34; that stretch reads MGAASGQRGRWPLSPPLLMLSLLVLLLQPSPAPA. The Extracellular portion of the chain corresponds to 35–1264; the sequence is LDPGLQPGNF…LEPQQARVGQ (1230 aa). 2 Peptidase M2 domains span residues 45–629 and 648–1227; these read SPDE…LGWP and ETDE…LGWP. N-linked (GlcNAc...) asparagine glycosylation is found at asparagine 59, asparagine 79, asparagine 116, asparagine 151, and asparagine 165. Cysteine 162 and cysteine 170 are joined by a disulfide. Tyrosine 236 is a chloride binding site. Residue asparagine 323 is glycosylated (N-linked (GlcNAc...) asparagine). Cysteine 364 and cysteine 382 are oxidised to a cystine. Histidine 395 contacts Zn(2+). Glutamate 396 (proton acceptor 1) is an active-site residue. Positions 399 and 423 each coordinate Zn(2+). N-linked (GlcNAc...) asparagine glycosylation is present at asparagine 514. Catalysis depends on histidine 525, which acts as the Proton donor 1. Arginine 534 contacts chloride. An intrachain disulfide couples cysteine 550 to cysteine 562. A glycan (N-linked (GlcNAc...) asparagine) is linked at asparagine 682. Residues asparagine 700 and asparagine 719 are each glycosylated (N-linked (GlcNAc...) (complex) asparagine). A disulfide bridge links cysteine 762 with cysteine 768. Asparagine 765 is a glycosylation site (N-linked (GlcNAc...) asparagine). Positions 796 and 834 each coordinate chloride. A glycan (N-linked (GlcNAc...) asparagine) is linked at asparagine 947. Cysteines 962 and 980 form a disulfide. Histidine 993 lines the Zn(2+) pocket. Glutamate 994 (proton acceptor 2) is an active-site residue. Residues histidine 997 and glutamate 1021 each contribute to the Zn(2+) site. Chloride contacts are provided by tryptophan 1095 and arginine 1099. Residue histidine 1123 is the Proton donor 2 of the active site. A chloride-binding site is contributed by arginine 1132. Cysteine 1148 and cysteine 1160 are oxidised to a cystine. An N-linked (GlcNAc...) asparagine glycan is attached at asparagine 1196. Positions 1220 to 1261 are juxtamembrane stalk; it reads HGETLGWPEYNWAPNTARAEGSTAESNRVNFLGLYLEPQQAR. The helical transmembrane segment at 1265–1281 threads the bilayer; sequence WVLLFLGVALLVATVGL. The Cytoplasmic portion of the chain corresponds to 1282–1312; it reads AHRLYNIRNHHSLRRPHRGPQFGSEVELRHS. A Phosphoserine modification is found at serine 1305.

This sequence belongs to the peptidase M2 family. As to quaternary structure, monomer and homodimer; homodimerizes following binding to an inhibitor. Interacts with calmodulin (CALM1, CALM2 or CALM3); interaction takes place in the cytoplasmic region and regulates phosphorylation and proteolytic cleavage. The cofactor is Zn(2+). Chloride serves as cofactor. Produced following proteolytic cleavage by secretase enzymes that cleave the transmembrane form in the juxtamembrane stalk region upstream of the transmembrane region. Cleavage can take place at different sites of the juxtamembrane stalk region. In terms of processing, phosphorylated by CK2 on Ser-1305; which allows membrane retention. Phosphorylated on tyrosine residues on its extracellular part, promoting cleavage by secretase enzymes and formation of the soluble form (Angiotensin-converting enzyme, soluble form). In terms of tissue distribution, highly expressed in kidney and lung; not expressed in the liver. In the brain, expressed in the cerebral cortex, hippocampus, cerebellum and basal ganglia/brainstem. Highly expressed in dopamine receptor DRD1-expressing neurons in the dorsal striatum and the nucleus accumbens of the brain. Specifically expressed in spermatocytes, adult testis.

The protein resides in the cell membrane. It is found in the cytoplasm. It localises to the secreted. The enzyme catalyses Release of a C-terminal dipeptide, oligopeptide-|-Xaa-Yaa, when Xaa is not Pro, and Yaa is neither Asp nor Glu. Thus, conversion of angiotensin I to angiotensin II, with increase in vasoconstrictor activity, but no action on angiotensin II.. It carries out the reaction angiotensin I + H2O = L-histidyl-L-leucine + angiotensin II. The catalysed reaction is bradykinin + H2O = L-Phe-L-Arg + bradykinin(1-7). It catalyses the reaction substance P + H2O = substance P(1-9) + L-Leu-L-Met-NH2. The enzyme catalyses substance P + H2O = substance P(1-8) + Gly-L-Leu-L-Met-NH2. It carries out the reaction substance P + H2O = L-Phe-L-Phe-Gly-L-Leu-L-Met-NH2 + substance P(1-6). The catalysed reaction is neurotensin + H2O = neurotensin(1-11) + L-isoleucyl-L-leucine. It catalyses the reaction goralatide + H2O = N-acetyl-L-seryl-L-aspartate + L-lysyl-L-proline. The enzyme catalyses Met-enkephalin + H2O = L-phenylalanyl-L-methionine + L-tyrosylglycylglycine. It carries out the reaction Leu-enkephalin + H2O = L-tyrosylglycylglycine + L-phenylalanyl-L-leucine. The catalysed reaction is Met-enkephalin-Arg-Phe + H2O = L-arginyl-L-phenylalanine + Met-enkephalin. With respect to regulation, the dipeptidyl carboxypeptidase activity is specifically inhibited by lisinopril, captopril and enalaprilat. The N-terminal catalytic domain, but not the C-terminal catalytic domain, is specifically inhibited by the phosphinic peptide RXP 407. The putative GPIase activity is nearly insensitive to captopril. Its function is as follows. Dipeptidyl carboxypeptidase that removes dipeptides from the C-terminus of a variety of circulating hormones, such as angiotensin I, bradykinin or enkephalins, thereby playing a key role in the regulation of blood pressure, electrolyte homeostasis or synaptic plasticity. Composed of two similar catalytic domains, each possessing a functional active site, with different selectivity for substrates. Plays a major role in the angiotensin-renin system that regulates blood pressure and sodium retention by the kidney by converting angiotensin I to angiotensin II, resulting in an increase of the vasoconstrictor activity of angiotensin. Also able to inactivate bradykinin, a potent vasodilator, and therefore enhance the blood pressure response. Acts as a regulator of synaptic transmission by mediating cleavage of neuropeptide hormones, such as substance P, neurotensin or enkephalins. Catalyzes degradation of different enkephalin neuropeptides (Met-enkephalin, Leu-enkephalin, Met-enkephalin-Arg-Phe and possibly Met-enkephalin-Arg-Gly-Leu). Acts as a regulator of synaptic plasticity in the nucleus accumbens of the brain by mediating cleavage of Met-enkephalin-Arg-Phe, a strong ligand of Mu-type opioid receptor OPRM1, into Met-enkephalin. Met-enkephalin-Arg-Phe cleavage by ACE decreases activation of OPRM1, leading to long-term synaptic potentiation of glutamate release. Also acts as a regulator of hematopoietic stem cell differentiation by mediating degradation of hemoregulatory peptide N-acetyl-SDKP (AcSDKP). Acts as a regulator of cannabinoid signaling pathway by mediating degradation of hemopressin, an antagonist peptide of the cannabinoid receptor CNR1. Involved in amyloid-beta metabolism by catalyzing degradation of Amyloid-beta protein 40 and Amyloid-beta protein 42 peptides, thereby preventing plaque formation. Catalyzes cleavage of cholecystokinin (maturation of Cholecystokinin-8 and Cholecystokinin-5) and Gonadoliberin-1 (both maturation and degradation) hormones. Degradation of hemoregulatory peptide N-acetyl-SDKP (AcSDKP) and amyloid-beta proteins is mediated by the N-terminal catalytic domain, while angiotensin I and cholecystokinin cleavage is mediated by the C-terminal catalytic region. In terms of biological role, soluble form that is released in blood plasma and other body fluids following proteolytic cleavage in the juxtamembrane stalk region. Isoform produced by alternative promoter usage that is specifically expressed in spermatocytes and adult testis, and which is required for male fertility. In contrast to somatic isoforms, only contains one catalytic domain. Acts as a dipeptidyl carboxypeptidase that removes dipeptides from the C-terminus of substrates. The identity of substrates that are needed for male fertility is unknown. Isoform Testis-specific and isoform Somatic have distinct activities and cannot completely compensate for the loss of the other when expressed in somatic tissues or testis. May also have a glycosidase activity which releases GPI-anchored proteins from the membrane by cleaving the mannose linkage in the GPI moiety. The GPIase activity was reported to be essential for the egg-binding ability of the sperm. This activity is however unclear and has been challenged by other groups, suggesting that it may be indirect. The polypeptide is Angiotensin-converting enzyme (Mus musculus (Mouse)).